The sequence spans 374 residues: Cytochrome b (374 aa).

A run of 4 helical transmembrane segments spans residues 25–45 (FGSM…FLAI), 69–90 (WIIQ…YMHI), 105–125 (WLSG…GYVL), and 170–190 (FFAL…IHII). 2 residues coordinate heme b: histidine 75 and histidine 89. Heme b contacts are provided by histidine 174 and histidine 188. Histidine 193 contributes to the a ubiquinone binding site. Transmembrane regions (helical) follow at residues 218–238 (YKDM…LSFT), 280–300 (LGGA…PFTH), 312–332 (LAQI…WTAT), and 339–358 (FITI…MINP).

This sequence belongs to the cytochrome b family. As to quaternary structure, the cytochrome bc1 complex contains 3 respiratory subunits (MT-CYB, CYC1 and UQCRFS1), 2 core proteins (UQCRC1 and UQCRC2) and probably 6 low-molecular weight proteins. Heme b is required as a cofactor.

The protein localises to the mitochondrion inner membrane. In terms of biological role, component of the ubiquinol-cytochrome c reductase complex (complex III or cytochrome b-c1 complex) that is part of the mitochondrial respiratory chain. The b-c1 complex mediates electron transfer from ubiquinol to cytochrome c. Contributes to the generation of a proton gradient across the mitochondrial membrane that is then used for ATP synthesis. The sequence is that of Cytochrome b (MT-CYB) from Calliophis bivirgatus (Blue Malaysian coral snake).